The sequence spans 349 residues: MLEGIEREAAEHSNGCSGPAGHAPPAGAPRHDWTVQQAVALHDLPLFELIDRARAVHRAFHGEHEVQLCTLLSVKTGGCPEDCAYCPQSSHYETEVGPERMLDVGAVLAAAERAREGGSTRFCMGAAWREVKDGPAFERVLDMVRGVKALGLEACCTLGMLTDDQARRLKEAGLDAYNHNLDTSRKAYKSIISTRTYDERLVTLRNVRRAGITVCSGGIIGMGESIADRCEMLVELARLDPHPESVPINALVRSPGTPLESLPPVDPIEFVRMIAVARVMMPRAMVRLSAGRTELSRETQLLCMYAGANSIFYGDRLLTTPNPGQDEDRALIEKAGLQPMAPAAARAAR.

The segment covering 1–11 has biased composition (basic and acidic residues); sequence MLEGIEREAAE. A disordered region spans residues 1 to 30; the sequence is MLEGIEREAAEHSNGCSGPAGHAPPAGAPR. Residues 64–283 form the Radical SAM core domain; that stretch reads HEVQLCTLLS…IAVARVMMPR (220 aa). The [4Fe-4S] cluster site is built by C79, C83, and C86. [2Fe-2S] cluster is bound by residues C123, C155, C215, and R287.

This sequence belongs to the radical SAM superfamily. Biotin synthase family. As to quaternary structure, homodimer. It depends on [4Fe-4S] cluster as a cofactor. [2Fe-2S] cluster serves as cofactor.

The enzyme catalyses (4R,5S)-dethiobiotin + (sulfur carrier)-SH + 2 reduced [2Fe-2S]-[ferredoxin] + 2 S-adenosyl-L-methionine = (sulfur carrier)-H + biotin + 2 5'-deoxyadenosine + 2 L-methionine + 2 oxidized [2Fe-2S]-[ferredoxin]. Its pathway is cofactor biosynthesis; biotin biosynthesis; biotin from 7,8-diaminononanoate: step 2/2. Its function is as follows. Catalyzes the conversion of dethiobiotin (DTB) to biotin by the insertion of a sulfur atom into dethiobiotin via a radical-based mechanism. The chain is Biotin synthase from Sorangium cellulosum (strain So ce56) (Polyangium cellulosum (strain So ce56)).